The sequence spans 451 residues: uncharacterized protein (451 aa).

One can recognise an HD domain in the interval 50-147; it reads RFEHSLGTMF…DVDADRMDYL (98 aa).

This is an uncharacterized protein from Methanocaldococcus jannaschii (strain ATCC 43067 / DSM 2661 / JAL-1 / JCM 10045 / NBRC 100440) (Methanococcus jannaschii).